Reading from the N-terminus, the 338-residue chain is MIGMGIETSCDETSIGIVRDGKDLLSLKIFSQIDLHKPYGGIVPEIASRAHLEKINLLLEEAMEESEIQFKDLSYVAVTSSPGLTGSLMVGAQMARCIHMVYETPILPVCHLQSHFAVLHLEGVPTEFPVLGLLLSGGNSAIYILHEFGKMELLGDTMDDALGEAFDKVAGLLELPYPGGPHIEVRAKEYKPSPNEKPILPALLRNLPQEEVSFSFSGLKTAVMVLLEKQKELSKERICWNFQNSAFDLVERNLKRAVSKTGIKRIFAAGGVLANFTLQNRLYTWAEKNSVELFAPKKKIYCTDNGAMVASLGYYLFQKGYQRDIDFTVSPSRQEIFS.

Residues histidine 111 and histidine 115 each contribute to the Fe cation site. Residues 134–138, aspartate 167, glycine 180, and asparagine 275 contribute to the substrate site; that span reads LLSGG. Aspartate 304 is a binding site for Fe cation.

Belongs to the KAE1 / TsaD family. Fe(2+) serves as cofactor.

It localises to the cytoplasm. It catalyses the reaction L-threonylcarbamoyladenylate + adenosine(37) in tRNA = N(6)-L-threonylcarbamoyladenosine(37) in tRNA + AMP + H(+). Its function is as follows. Required for the formation of a threonylcarbamoyl group on adenosine at position 37 (t(6)A37) in tRNAs that read codons beginning with adenine. Is involved in the transfer of the threonylcarbamoyl moiety of threonylcarbamoyl-AMP (TC-AMP) to the N6 group of A37, together with TsaE and TsaB. TsaD likely plays a direct catalytic role in this reaction. This is tRNA N6-adenosine threonylcarbamoyltransferase from Leptospira interrogans serogroup Icterohaemorrhagiae serovar copenhageni (strain Fiocruz L1-130).